The primary structure comprises 531 residues: T-complex protein 1 subunit zeta (531 aa).

Residue Ala2 is modified to N-acetylalanine. Lys5 is modified (N6-acetyllysine). Residue Gly39 participates in ADP binding. Position 39 (Gly39) interacts with ATP. Residue Asp90 coordinates Mg(2+). ADP-binding residues include Gly91, Thr92, Thr93, Ser94, Thr158, and Lys159. Residues Gly91, Thr92, and Thr93 each contribute to the ATP site. N6-acetyllysine is present on Lys199. Residue Ser205 is modified to Phosphoserine. Lys251 participates in a covalent cross-link: Glycyl lysine isopeptide (Lys-Gly) (interchain with G-Cter in SUMO2). N6-acetyllysine occurs at positions 287, 365, 377, and 388. Ala411 lines the ADP pocket. ATP is bound by residues Ala411, Gly412, Asp496, and Lys501. Asp496 is an ADP binding site.

The protein belongs to the TCP-1 chaperonin family. As to quaternary structure, component of the chaperonin-containing T-complex (TRiC), a hexadecamer composed of two identical back-to-back stacked rings enclosing a protein folding chamber. Each ring is made up of eight different subunits: TCP1/CCT1, CCT2, CCT3, CCT4, CCT5, CCT6A/CCT6, CCT7, CCT8. Interacts with PACRG.

The protein resides in the cytoplasm. It carries out the reaction ATP + H2O = ADP + phosphate + H(+). Its function is as follows. Component of the chaperonin-containing T-complex (TRiC), a molecular chaperone complex that assists the folding of actin, tubulin and other proteins upon ATP hydrolysis. The TRiC complex mediates the folding of WRAP53/TCAB1, thereby regulating telomere maintenance. This Bos taurus (Bovine) protein is T-complex protein 1 subunit zeta (CCT6A).